The sequence spans 362 residues: Putative glutamate--cysteine ligase 2-1 (362 aa).

This sequence belongs to the glutamate--cysteine ligase type 2 family. YbdK subfamily.

The enzyme catalyses L-cysteine + L-glutamate + ATP = gamma-L-glutamyl-L-cysteine + ADP + phosphate + H(+). ATP-dependent carboxylate-amine ligase which exhibits weak glutamate--cysteine ligase activity. This Streptomyces avermitilis (strain ATCC 31267 / DSM 46492 / JCM 5070 / NBRC 14893 / NCIMB 12804 / NRRL 8165 / MA-4680) protein is Putative glutamate--cysteine ligase 2-1.